A 378-amino-acid polypeptide reads, in one-letter code: UPF0754 membrane protein SH1116 (378 aa).

The next 2 helical transmembrane spans lie at 4-24 (FLVI…TNVI) and 358-378 (SLGF…AIFV).

It belongs to the UPF0754 family.

The protein localises to the cell membrane. The polypeptide is UPF0754 membrane protein SH1116 (Staphylococcus haemolyticus (strain JCSC1435)).